A 782-amino-acid chain; its full sequence is Zinc finger protein 786 (782 aa).

One can recognise a KRAB domain in the interval 9-80 (LTFEDVAIYF…WRESQKSGNI (72 aa)). Residues 141 to 164 (PQRHDARAPPPLACGPSESTLKEG) form a disordered region. The C2H2-type 1; degenerate zinc finger occupies 192–209 (CGESCWENNHLVMHQRGH). The C2H2-type 2 zinc-finger motif lies at 240 to 262 (FRCGVCGKSFRRKLCLLRHLAAH). A disordered region spans residues 285-364 (SHRLPQQGEK…EGDTEALQHG (80 aa)). The C2H2-type 3; degenerate zinc finger occupies 369 to 391 (CSCSECGERSPMSARLASPCRAH). 3 C2H2-type zinc fingers span residues 397–419 (FQCA…QHAH), 425–447 (FSCR…IRVH), and 453–475 (FRCA…QRLH). The C2H2-type 7; degenerate zinc finger occupies 481–503 (FQCPECGLSFRLESMLRAHRLRH). C2H2-type zinc fingers lie at residues 509 to 531 (FSCS…LRVH), 537 to 559 (FQCL…QHTH), 565 to 587 (FSCG…LRVH), 593 to 615 (FQCP…QRLH), 621 to 643 (FQCP…QLLH), 649 to 670 (FSCE…IRTH), 676 to 698 (FQCP…QGLH), 704 to 726 (FHCP…QRIH), and 732 to 754 (FACG…IRVH).

Belongs to the krueppel C2H2-type zinc-finger protein family.

The protein localises to the nucleus. Functionally, may be involved in transcriptional regulation. This is Zinc finger protein 786 (ZNF786) from Homo sapiens (Human).